A 178-amino-acid polypeptide reads, in one-letter code: Crossover junction endodeoxyribonuclease RuvC (178 aa).

Residues Asp7, Glu67, and Asp139 contribute to the active site. Residues Asp7, Glu67, and Asp139 each coordinate Mg(2+).

It belongs to the RuvC family. In terms of assembly, homodimer which binds Holliday junction (HJ) DNA. The HJ becomes 2-fold symmetrical on binding to RuvC with unstacked arms; it has a different conformation from HJ DNA in complex with RuvA. In the full resolvosome a probable DNA-RuvA(4)-RuvB(12)-RuvC(2) complex forms which resolves the HJ. The cofactor is Mg(2+).

The protein localises to the cytoplasm. It catalyses the reaction Endonucleolytic cleavage at a junction such as a reciprocal single-stranded crossover between two homologous DNA duplexes (Holliday junction).. The RuvA-RuvB-RuvC complex processes Holliday junction (HJ) DNA during genetic recombination and DNA repair. Endonuclease that resolves HJ intermediates. Cleaves cruciform DNA by making single-stranded nicks across the HJ at symmetrical positions within the homologous arms, yielding a 5'-phosphate and a 3'-hydroxyl group; requires a central core of homology in the junction. The consensus cleavage sequence is 5'-(A/T)TT(C/G)-3'. Cleavage occurs on the 3'-side of the TT dinucleotide at the point of strand exchange. HJ branch migration catalyzed by RuvA-RuvB allows RuvC to scan DNA until it finds its consensus sequence, where it cleaves and resolves the cruciform DNA. This is Crossover junction endodeoxyribonuclease RuvC from Trichlorobacter lovleyi (strain ATCC BAA-1151 / DSM 17278 / SZ) (Geobacter lovleyi).